The chain runs to 500 residues: NAD(P)H-quinone oxidoreductase chain 4, chloroplastic (500 aa).

14 helical membrane passes run 4 to 24 (FPWL…IFFL), 37 to 57 (MSIC…HFQL), 87 to 107 (LGSI…AWPV), 113 to 130 (LFYF…GLFS), 134 to 154 (LLLF…LLSM), 167 to 187 (FILY…GMGL), 211 to 231 (ILFY…IPLH), 242 to 262 (HYST…YGLI), 272 to 292 (AHYL…IYAA), 313 to 333 (MGFI…GAIL), 334 to 354 (QILS…TACD), 386 to 406 (LALP…GLIT), 417 to 437 (LITF…LSML), and 462 to 482 (LFLL…PDFV).

Belongs to the complex I subunit 4 family.

It localises to the plastid. The protein localises to the chloroplast thylakoid membrane. The catalysed reaction is a plastoquinone + NADH + (n+1) H(+)(in) = a plastoquinol + NAD(+) + n H(+)(out). It catalyses the reaction a plastoquinone + NADPH + (n+1) H(+)(in) = a plastoquinol + NADP(+) + n H(+)(out). In Oryza nivara (Indian wild rice), this protein is NAD(P)H-quinone oxidoreductase chain 4, chloroplastic.